The chain runs to 397 residues: uncharacterized protein (397 aa).

12 consecutive transmembrane segments (helical) span residues 10–30 (FIIFVLMICTFSIGYTEYAVM), 48–68 (GLLVTAYAASVCLTGPLVTII), 76–96 (PVLLGLMAIFILSNLMSALAP), 106–126 (ILSASIHGAFFAIAMVFASEM), 141–161 (GGLTVALMLGVPFGSYLGDVL), 165–185 (AVFSIITALGVIGFLGLMAAV), 209–229 (LFSFAITILGYSGVFIAYTFI), 242–262 (VGITGALFAYGLGGVAGNFFA), 274–294 (MIGVMIGLIGVLAVFPYIAIY), 296–316 (AAAIVATFLFGACAFGTPPLL), 334–354 (VSVSAFNLANALGAWIGGMIL), and 363–383 (LFAGGALMTACGLVLSTFAHL).

It belongs to the major facilitator superfamily.

It is found in the cell membrane. This is an uncharacterized protein from Bacillus subtilis (strain 168).